A 657-amino-acid chain; its full sequence is Probable potassium transport system protein Kup (657 aa).

Helical transmembrane passes span 14–34 (IGGLLITLGIIYGDIGTSPLY), 47–67 (ADIVLGGISCVFWTLTLQTTI), 96–116 (IQWLIVPAIIGGSALLADGII), 140–160 (TIVYIVITILFILFTIQQFGT), 166–186 (FFAPMMLIWFAMLGTLGFIQI), 201–221 (AYHLLSVHPDGFFVLGFVFLC), 242–262 (ISWIFVKTTLVLNYFGQAAYL), 283–303 (LIMPHWFLPFGIVVATLAAVI), 340–360 (LYIPSINWLLFFGCVGIVLHF), 371–391 (GLAIILCMIMTTILLNYYLIM), 396–416 (LYFMVPLITIYLLIEFSFLIA), and 425–445 (GYVTLIIAILLISIMTIWYLA).

It belongs to the HAK/KUP transporter (TC 2.A.72) family.

It is found in the cell inner membrane. The enzyme catalyses K(+)(in) + H(+)(in) = K(+)(out) + H(+)(out). In terms of biological role, transport of potassium into the cell. Likely operates as a K(+):H(+) symporter. The sequence is that of Probable potassium transport system protein Kup from Flavobacterium johnsoniae (strain ATCC 17061 / DSM 2064 / JCM 8514 / BCRC 14874 / CCUG 350202 / NBRC 14942 / NCIMB 11054 / UW101) (Cytophaga johnsonae).